A 71-amino-acid chain; its full sequence is Large ribosomal subunit protein bL31 (71 aa).

Zn(2+)-binding residues include Cys-16, Cys-18, Cys-36, and Cys-39.

Belongs to the bacterial ribosomal protein bL31 family. Type A subfamily. In terms of assembly, part of the 50S ribosomal subunit. Requires Zn(2+) as cofactor.

Binds the 23S rRNA. The polypeptide is Large ribosomal subunit protein bL31 (Syntrophus aciditrophicus (strain SB)).